We begin with the raw amino-acid sequence, 521 residues long: MTQDKILILDFGSQVTQLIARRVREAHVYCELHSFDMPLDEIKAFNPKGIILSGGPNSVYESDYQADTGIFDLGIPVLGICYGMQFMAHHLGGEVQPGNQREFGYAQVKTIDSELTRGIQDGEPNTLDVWMSHGDKVSKLPDGFAVIGNTPSCPIAMMENAEKQFYGIQFHPEVTHTKQGRALLNRFVLDICGAQPGWTMPNYIEEAVAKIREQVGSDEVILGLSGGVDSSVAAALIHRAIGDQLTCVFVDHGLLRLNESKMVMDMFARNLGVKVIHVDAEGQFMAKLAGVTDPEKKRKIIGAEFIEVFDAEEKKLTNAKWLAQGTIYPDVIESAGAKTKKAHAIKSHHNVGGLPENMKLKLLEPLRDLFKDEVRELGVALGLPREMVYRHPFPGPGLGVRILGEVKKEYADLLRQADDIFIQELRNTTDENGTSWYDLTSQAFAVFLPVKSVGVMGDGRTYDYVIALRAVITSDFMTAHWAELPYSLLGKVSNRIINEVKGINRVVYDVSGKPPATIEWE.

Residues 5 to 197 form the Glutamine amidotransferase type-1 domain; the sequence is KILILDFGSQ…VLDICGAQPG (193 aa). Cys-81 functions as the Nucleophile in the catalytic mechanism. Catalysis depends on residues His-171 and Glu-173. Residues 198 to 390 enclose the GMPS ATP-PPase domain; it reads WTMPNYIEEA…LGLPREMVYR (193 aa). 225–231 provides a ligand contact to ATP; the sequence is SGGVDSS.

In terms of assembly, homodimer.

It catalyses the reaction XMP + L-glutamine + ATP + H2O = GMP + L-glutamate + AMP + diphosphate + 2 H(+). Its pathway is purine metabolism; GMP biosynthesis; GMP from XMP (L-Gln route): step 1/1. Its function is as follows. Catalyzes the synthesis of GMP from XMP. The sequence is that of GMP synthase [glutamine-hydrolyzing] (guaA) from Neisseria meningitidis serogroup B (strain ATCC BAA-335 / MC58).